The chain runs to 336 residues: Casein kinase II subunit alpha (336 aa).

The Protein kinase domain maps to 37–322 (YQLVRKLGRG…AREAMAHPYF (286 aa)). ATP is bound by residues 43–51 (LGRGKYSEV) and lysine 66. Aspartate 154 acts as the Proton acceptor in catalysis.

Belongs to the protein kinase superfamily. Ser/Thr protein kinase family. CK2 subfamily. Tetramer of two alpha and two beta chains. The cofactor is Mg(2+).

The protein resides in the nucleus. It is found in the nucleolus. The catalysed reaction is L-seryl-[protein] + ATP = O-phospho-L-seryl-[protein] + ADP + H(+). It catalyses the reaction L-threonyl-[protein] + ATP = O-phospho-L-threonyl-[protein] + ADP + H(+). Casein kinases are operationally defined by their preferential utilization of acidic proteins such as caseins as substrates. The alpha chain contains the catalytic site. May participate in Wnt signaling. The chain is Casein kinase II subunit alpha (CkIIalpha) from Drosophila melanogaster (Fruit fly).